Here is a 477-residue protein sequence, read N- to C-terminus: UDP-sulfoquinovose synthase, chloroplastic (477 aa).

Positions 1 to 21 (MAHLLSASCPSVISLSSSSSK) are disordered. The N-terminal 86 residues, 1–86 (MAHLLSASCP…TNNSSSKPKR (86 aa)), are a transit peptide targeting the chloroplast. Residues 95–96 (YC), 115–119 (DNLVR), 158–159 (DI), Arg184, and Asn202 each bind NAD(+). Residue Arg184 participates in substrate binding. Positions 228 and 265 each coordinate substrate. Thr228 is a catalytic residue. Residues Tyr265 and Lys269 each contribute to the NAD(+) site. Catalysis depends on Tyr265, which acts as the Proton acceptor. Residue Lys269 is part of the active site. Gln292 lines the substrate pocket. An NAD(+)-binding site is contributed by Val295. Substrate contacts are provided by residues 322–325 (ALNR), 337–339 (TVY), and 410–412 (RVE).

Belongs to the NAD(P)-dependent epimerase/dehydratase family. As to quaternary structure, homodimer. NAD(+) is required as a cofactor.

The protein localises to the plastid. Its subcellular location is the chloroplast. The enzyme catalyses sulfite + UDP-alpha-D-glucose + H(+) = UDP-alpha-D-6-sulfoquinovose + H2O. Its activity is regulated as follows. Concentrations above 100 uM sulfite inhibit the reaction. Its function is as follows. Involved in the biosynthesis of sulfolipids found in thylakoid membranes. Converts UDP-glucose and sulfite to the sulfolipid head group precursor UDP-sulfoquinovose. This is UDP-sulfoquinovose synthase, chloroplastic (SQD1) from Arabidopsis thaliana (Mouse-ear cress).